The chain runs to 507 residues: ATP synthase subunit alpha, chloroplastic (507 aa).

170 to 177 lines the ATP pocket; sequence IGDRQTGK.

The protein belongs to the ATPase alpha/beta chains family. As to quaternary structure, F-type ATPases have 2 components, CF(1) - the catalytic core - and CF(0) - the membrane proton channel. CF(1) has five subunits: alpha(3), beta(3), gamma(1), delta(1), epsilon(1). CF(0) has four main subunits: a, b, b' and c.

It localises to the plastid. Its subcellular location is the chloroplast thylakoid membrane. It catalyses the reaction ATP + H2O + 4 H(+)(in) = ADP + phosphate + 5 H(+)(out). In terms of biological role, produces ATP from ADP in the presence of a proton gradient across the membrane. The alpha chain is a regulatory subunit. The protein is ATP synthase subunit alpha, chloroplastic of Adiantum capillus-veneris (Maidenhair fern).